The primary structure comprises 602 residues: Toxin YwqJ (602 aa).

Residues 1 to 235 enclose the LXG domain; sequence MSKVFESKSL…TTYIDAKTQQ (235 aa). Coiled coils occupy residues 6–41 and 227–251; these read ESKS…VADL and TYID…EANK.

In the N-terminal section; belongs to the LXG family. In terms of assembly, probably interacts with cognate immunity protein YwqK but not with non-cognate immunity proteins. The interaction inhibits the toxic activity of YwqJ.

The protein resides in the secreted. Toxic component of one of 6 LXG toxin-immunity modules in this strain. They promote kin selection, mediate competition in biofilms, and drive spatial segregation of different strains, indicating that LXG toxins may help avoid warfare between strains in biofilms. Mediates intercellular competition during biofilm formation; disruption of the operon disadvantages the bacteria, but overexpression of the cognate immunity protein restores growth in competition with wild-type. Overexpression alone in situ causes growth arrest but not cell lysis; no effect is seen on DNA or rRNA. Co-overexpression with cognate immunity protein YwqK does not cause growth arrest. The toxic effect is dependent on the epsA and tapA operons which are required for biofilm formation. Its toxic effects are probably neutralized by its cognate immunity protein YwqK, but not by immunity proteins specific to other toxins with the LXG domain. May have deaminase activity. The polypeptide is Toxin YwqJ (ywqJ) (Bacillus subtilis (strain 168)).